The chain runs to 660 residues: Chaperone protein DnaK (660 aa).

Thr201 carries the phosphothreonine; by autocatalysis modification. Positions 599–660 (EAMQAQSASA…ADVEIVDKPE (62 aa)) are disordered. Residues 600–617 (AMQAQSASAAASSAANAQ) show a composition bias toward low complexity.

This sequence belongs to the heat shock protein 70 family.

Acts as a chaperone. This Chlamydia trachomatis serovar A (strain ATCC VR-571B / DSM 19440 / HAR-13) protein is Chaperone protein DnaK.